The primary structure comprises 109 residues: Small ribosomal subunit protein uS10 (109 aa).

This sequence belongs to the universal ribosomal protein uS10 family. Part of the 30S ribosomal subunit.

In terms of biological role, involved in the binding of tRNA to the ribosomes. The chain is Small ribosomal subunit protein uS10 from Koribacter versatilis (strain Ellin345).